A 240-amino-acid polypeptide reads, in one-letter code: Putative N-acetylmannosamine-6-phosphate 2-epimerase (240 aa).

It belongs to the NanE family.

The enzyme catalyses an N-acyl-D-glucosamine 6-phosphate = an N-acyl-D-mannosamine 6-phosphate. It participates in amino-sugar metabolism; N-acetylneuraminate degradation; D-fructose 6-phosphate from N-acetylneuraminate: step 3/5. Functionally, converts N-acetylmannosamine-6-phosphate (ManNAc-6-P) to N-acetylglucosamine-6-phosphate (GlcNAc-6-P). This chain is Putative N-acetylmannosamine-6-phosphate 2-epimerase, found in Vibrio cholerae serotype O1 (strain ATCC 39315 / El Tor Inaba N16961).